We begin with the raw amino-acid sequence, 172 residues long: RNA silencing suppressor p19 (172 aa).

Composition is skewed to basic and acidic residues over residues 1 to 14 (MERAIQGSDVREQA) and 150 to 172 (SEREGNVSRRRPEGTEAFKEESE). Disordered stretches follow at residues 1–34 (MERAIQGSDVREQADSECWDGGGGGTTSPFKLPD) and 145–172 (LQPTPSEREGNVSRRRPEGTEAFKEESE).

The protein belongs to the tombusvirus protein p19 family. Homodimer.

In terms of biological role, viral suppressor of RNA silencing which binds specifically to silencing RNAs (siRNAs). Acts as a molecular caliper to specifically select siRNAs based on the length of the duplex region of the RNA. The sequence is that of RNA silencing suppressor p19 from Cymbidium ringspot virus (CymRSV).